A 303-amino-acid chain; its full sequence is Glycine--tRNA ligase alpha subunit (303 aa).

Belongs to the class-II aminoacyl-tRNA synthetase family. In terms of assembly, tetramer of two alpha and two beta subunits.

It localises to the cytoplasm. The catalysed reaction is tRNA(Gly) + glycine + ATP = glycyl-tRNA(Gly) + AMP + diphosphate. The polypeptide is Glycine--tRNA ligase alpha subunit (Salmonella paratyphi A (strain ATCC 9150 / SARB42)).